The sequence spans 397 residues: S-adenosylmethionine synthase (397 aa).

His17 is an ATP binding site. A Mg(2+)-binding site is contributed by Asp19. Residue Glu45 coordinates K(+). Residues Glu58 and Gln101 each contribute to the L-methionine site. The segment at 101-111 is flexible loop; it reads QSPDIAQGVDK. ATP contacts are provided by residues 176–178, 243–244, Asp252, 258–259, and Lys279; these read DGK, RF, and RK. Asp252 contributes to the L-methionine binding site. Lys283 is an L-methionine binding site.

It belongs to the AdoMet synthase family. Homotetramer; dimer of dimers. Requires Mg(2+) as cofactor. K(+) serves as cofactor.

Its subcellular location is the cytoplasm. The enzyme catalyses L-methionine + ATP + H2O = S-adenosyl-L-methionine + phosphate + diphosphate. It functions in the pathway amino-acid biosynthesis; S-adenosyl-L-methionine biosynthesis; S-adenosyl-L-methionine from L-methionine: step 1/1. Its function is as follows. Catalyzes the formation of S-adenosylmethionine (AdoMet) from methionine and ATP. The overall synthetic reaction is composed of two sequential steps, AdoMet formation and the subsequent tripolyphosphate hydrolysis which occurs prior to release of AdoMet from the enzyme. This is S-adenosylmethionine synthase from Staphylococcus aureus.